Reading from the N-terminus, the 330-residue chain is D-alanine--D-alanine ligase (330 aa).

Residues 120 to 326 enclose the ATP-grasp domain; sequence KLWYDALGIP…FKTFLQKAVL (207 aa). Position 150 to 205 (150 to 205) interacts with ATP; sequence AFKQWGGLFVKAACQGSSVGCYKVTSEAELSKAINDAFGYSQQVLVEKAVKPRELE. Residues Asp280, Glu293, and Asn295 each contribute to the Mg(2+) site.

Belongs to the D-alanine--D-alanine ligase family. Requires Mg(2+) as cofactor. The cofactor is Mn(2+).

Its subcellular location is the cytoplasm. It catalyses the reaction 2 D-alanine + ATP = D-alanyl-D-alanine + ADP + phosphate + H(+). It participates in cell wall biogenesis; peptidoglycan biosynthesis. In terms of biological role, cell wall formation. The protein is D-alanine--D-alanine ligase of Aliivibrio fischeri (strain ATCC 700601 / ES114) (Vibrio fischeri).